We begin with the raw amino-acid sequence, 153 residues long: Regulatory protein RecX (153 aa).

The protein belongs to the RecX family.

The protein localises to the cytoplasm. In terms of biological role, modulates RecA activity. The chain is Regulatory protein RecX from Mannheimia succiniciproducens (strain KCTC 0769BP / MBEL55E).